The following is a 453-amino-acid chain: uncharacterized protein (453 aa).

Residues Cys-74, Cys-80, Cys-83, and Cys-162 each contribute to the [4Fe-4S] cluster site. Residues Gln-286, Tyr-315, Glu-336, and Asp-384 each coordinate S-adenosyl-L-methionine. Residue Cys-411 is the Nucleophile of the active site.

Belongs to the class I-like SAM-binding methyltransferase superfamily. RNA M5U methyltransferase family.

This is an uncharacterized protein from Staphylococcus aureus (strain MW2).